A 342-amino-acid chain; its full sequence is L-threonine 3-dehydrogenase (342 aa).

A Zn(2+)-binding site is contributed by Cys-38. Active-site charge relay system residues include Thr-40 and His-43. Zn(2+) contacts are provided by His-63, Glu-64, Cys-93, Cys-96, Cys-99, and Cys-107. NAD(+) is bound by residues Val-175, Asp-195, Arg-200, 262–264 (LGI), and 286–287 (IY).

This sequence belongs to the zinc-containing alcohol dehydrogenase family. As to quaternary structure, homotetramer. Zn(2+) is required as a cofactor.

The protein localises to the cytoplasm. The catalysed reaction is L-threonine + NAD(+) = (2S)-2-amino-3-oxobutanoate + NADH + H(+). It functions in the pathway amino-acid degradation; L-threonine degradation via oxydo-reductase pathway; glycine from L-threonine: step 1/2. Its function is as follows. Catalyzes the NAD(+)-dependent oxidation of L-threonine to 2-amino-3-ketobutyrate. The protein is L-threonine 3-dehydrogenase of Coxiella burnetii (strain Dugway 5J108-111).